Consider the following 384-residue polypeptide: Tryptophan--tRNA ligase (384 aa).

A 'HIGH' region motif is present at residues 81–89 (PSGPMHIGH). The 'KMSKS' region motif lies at 252–256 (KMSAS).

This sequence belongs to the class-I aminoacyl-tRNA synthetase family.

The protein resides in the cytoplasm. The enzyme catalyses tRNA(Trp) + L-tryptophan + ATP = L-tryptophyl-tRNA(Trp) + AMP + diphosphate + H(+). In Thermococcus onnurineus (strain NA1), this protein is Tryptophan--tRNA ligase.